The sequence spans 555 residues: Vetispiradiene synthase 1 (555 aa).

Asp308, Asp312, Asp451, Thr455, and Glu459 together coordinate Mg(2+). The DDXXD motif signature appears at 308 to 312 (DDTFD).

This sequence belongs to the terpene synthase family. Tpsa subfamily. The cofactor is Mg(2+).

The protein localises to the cytoplasm. It carries out the reaction (2E,6E)-farnesyl diphosphate = (-)-vetispiradiene + diphosphate. Its pathway is secondary metabolite biosynthesis; terpenoid biosynthesis. In terms of biological role, sesquiterpene synthase that catalyzes the formation of vetispiradiene from trans,trans-farnesyl diphosphate. The initial internal cyclization produces the monocyclic intermediate germacrene A. This Hyoscyamus muticus (Egyptian henbane) protein is Vetispiradiene synthase 1.